Consider the following 826-residue polypeptide: Zinc phosphodiesterase ELAC protein 2 (826 aa).

A mitochondrion-targeting transit peptide spans 1–16 (MWALCSLLRSAAGRTM). Positions 15–24 (TMSQGRTISQ) are enriched in polar residues. Disordered stretches follow at residues 15–51 (TMSQGRTISQAPARRERPRKDPLRHLRTREKRGPSGC) and 189–231 (QRRG…VSQR). Basic and acidic residues predominate over residues 27–38 (ARRERPRKDPLR). Serine 199, serine 208, serine 212, serine 229, serine 618, and serine 736 each carry phosphoserine. A compositionally biased stretch (basic and acidic residues) spans 208-224 (SPERSSDSESNENEPHL). Residues 798–826 (ELAGGLEDGEPQQKRAHTEEPQAKKVRAQ) are disordered. Positions 808–820 (PQQKRAHTEEPQA) are enriched in basic and acidic residues.

This sequence belongs to the RNase Z family. As to quaternary structure, homodimer. Interacts with PTCD1. It depends on Zn(2+) as a cofactor.

The protein resides in the mitochondrion. The protein localises to the mitochondrion matrix. It is found in the mitochondrion nucleoid. It localises to the nucleus. The catalysed reaction is Endonucleolytic cleavage of RNA, removing extra 3' nucleotides from tRNA precursor, generating 3' termini of tRNAs. A 3'-hydroxy group is left at the tRNA terminus and a 5'-phosphoryl group is left at the trailer molecule.. Its function is as follows. Zinc phosphodiesterase, which displays mitochondrial tRNA 3'-processing endonuclease activity. Involved in tRNA maturation, by removing a 3'-trailer from precursor tRNA. Associates with mitochondrial DNA complexes at the nucleoids to initiate RNA processing and ribosome assembly. The protein is Zinc phosphodiesterase ELAC protein 2 (ELAC2) of Gorilla gorilla gorilla (Western lowland gorilla).